Reading from the N-terminus, the 356-residue chain is Peptide chain release factor 1 (356 aa).

Gln-233 is modified (N5-methylglutamine).

This sequence belongs to the prokaryotic/mitochondrial release factor family. In terms of processing, methylated by PrmC. Methylation increases the termination efficiency of RF1.

Its subcellular location is the cytoplasm. Peptide chain release factor 1 directs the termination of translation in response to the peptide chain termination codons UAG and UAA. The polypeptide is Peptide chain release factor 1 (Shouchella clausii (strain KSM-K16) (Alkalihalobacillus clausii)).